Consider the following 308-residue polypeptide: ATP synthase gamma chain (308 aa).

This sequence belongs to the ATPase gamma chain family. As to quaternary structure, F-type ATPases have 2 components, CF(1) - the catalytic core - and CF(0) - the membrane proton channel. CF(1) has five subunits: alpha(3), beta(3), gamma(1), delta(1), epsilon(1). CF(0) has three main subunits: a, b and c.

Its subcellular location is the cell membrane. Its function is as follows. Produces ATP from ADP in the presence of a proton gradient across the membrane. The gamma chain is believed to be important in regulating ATPase activity and the flow of protons through the CF(0) complex. In Saccharopolyspora erythraea (strain ATCC 11635 / DSM 40517 / JCM 4748 / NBRC 13426 / NCIMB 8594 / NRRL 2338), this protein is ATP synthase gamma chain.